We begin with the raw amino-acid sequence, 429 residues long: Alanine aminotransferase (429 aa).

Positions 65 and 204 each coordinate L-alanine. Lys265 bears the N6-(pyridoxal phosphate)lysine mark. Arg403 is a binding site for L-alanine.

Belongs to the class-I pyridoxal-phosphate-dependent aminotransferase family. Homodimer. Pyridoxal 5'-phosphate serves as cofactor.

The protein resides in the cytoplasm. It carries out the reaction L-alanine + 2-oxoglutarate = pyruvate + L-glutamate. In Mycobacterium bovis (strain ATCC BAA-935 / AF2122/97), this protein is Alanine aminotransferase (aspC).